Consider the following 468-residue polypeptide: Monogalactosyldiacylglycerol synthase 2, chloroplastic (468 aa).

Residues H82, R251, 361 to 365, and E383 each bind UDP; that span reads GTIAE.

This sequence belongs to the glycosyltransferase 28 family. As to expression, expressed mainly in floral buds. Detected in roots, leaves, stems, siliques and pollen tubes.

It localises to the plastid. The protein resides in the chloroplast outer membrane. It catalyses the reaction a 1,2-diacyl-sn-glycerol + UDP-alpha-D-galactose = a 1,2-diacyl-3-O-(beta-D-galactosyl)-sn-glycerol + UDP + H(+). It carries out the reaction 1,2-di-(9Z,12Z-octadecadienoyl)-sn-glycerol + UDP-alpha-D-galactose = 1,2-di-(9Z,12Z-octadecadienoyl)-3-beta-D-galactosyl-sn-glycerol + UDP + H(+). The enzyme catalyses 1-(9Z-octadecenoyl)-2-hexadecanoyl-sn-glycerol + UDP-alpha-D-galactose = 1-(9Z-octadecenoyl)-2-hexadecanoyl-3-beta-D-galactosyl-sn-glycerol + UDP + H(+). The catalysed reaction is 1,2-di-(9Z-octadecenoyl)-sn-glycerol + UDP-alpha-D-galactose = 1,2-di-(9Z-octadecenoyl)-3-beta-D-galactosyl-sn-glycerol + UDP + H(+). Inhibited by galvestine-1. Its function is as follows. Involved in the synthesis of monogalactosyldiacylglycerol, the major structural component of photosynthetic membranes and in the chloroplast envelope biogenesis. Can use both prokaryotic (18:1/16:0) or eukaryotic (18:2/18:2) 1,2-diacylglycerol species, but operates with some preference for the eukaryotic one. Plays a minor role in galactolipid synthesis in chloroplasts. Is required for membrane lipid remodeling in phosphate-starved roots. Acts as the minor factor involved in digalactosyldiacylglycerol (DGDG) biosynthesis in phosphate-starved roots. Does not seem to be required for plant growth under nutrient-sufficient conditions. Required for membrane lipid remodeling in plants grown in acidic conditions. This chain is Monogalactosyldiacylglycerol synthase 2, chloroplastic, found in Arabidopsis thaliana (Mouse-ear cress).